Consider the following 106-residue polypeptide: Probable glutaredoxin (106 aa).

A Glutaredoxin domain is found at 8–106; that stretch reads IVQKITGADP…AKYLDVQFTQ (99 aa). An intrachain disulfide couples cysteine 28 to cysteine 31.

Belongs to the glutaredoxin family.

The protein resides in the virion. This Acanthamoeba polyphaga mimivirus (APMV) protein is Probable glutaredoxin.